The following is a 635-amino-acid chain: Very-long-chain aldehyde decarbonylase GL1-6 (635 aa).

The next 4 helical transmembrane spans lie at 46–66 (LLNFMVFPMLLLRLLYGQLWI), 100–120 (IILTALVFYLVSATMPQAQVA), 127–147 (GMVVTAVLHAGPVEFLYYWLH), and 183–203 (VVYFVLLAIPILSTVATGTVS). A Fatty acid hydroxylase domain is found at 139 to 273 (VEFLYYWLHR…MPVYDYIYGT (135 aa)).

Belongs to the sterol desaturase family. As to quaternary structure, homodimer.

The protein resides in the endoplasmic reticulum membrane. The enzyme catalyses a long-chain fatty aldehyde + 2 NADPH + O2 + H(+) = a long-chain alkane + formate + 2 NADP(+) + H2O. In terms of biological role, aldehyde decarbonylase involved in the conversion of aldehydes to alkanes. Core component of a very-long-chain alkane synthesis complex. This chain is Very-long-chain aldehyde decarbonylase GL1-6, found in Oryza sativa subsp. indica (Rice).